The chain runs to 309 residues: Protoheme IX farnesyltransferase (309 aa).

A run of 9 helical transmembrane segments spans residues I35–F55, L64–I84, V114–V134, T135–T155, I161–V181, I187–L207, M231–F251, L253–L273, and F289–W309.

It belongs to the UbiA prenyltransferase family. Protoheme IX farnesyltransferase subfamily. In terms of assembly, interacts with CtaA.

The protein resides in the cell membrane. The enzyme catalyses heme b + (2E,6E)-farnesyl diphosphate + H2O = Fe(II)-heme o + diphosphate. The protein operates within porphyrin-containing compound metabolism; heme O biosynthesis; heme O from protoheme: step 1/1. In terms of biological role, converts heme B (protoheme IX) to heme O by substitution of the vinyl group on carbon 2 of heme B porphyrin ring with a hydroxyethyl farnesyl side group. This Geobacillus kaustophilus (strain HTA426) protein is Protoheme IX farnesyltransferase.